The sequence spans 383 residues: Putative glutamate--cysteine ligase 2-1 (383 aa).

Belongs to the glutamate--cysteine ligase type 2 family. YbdK subfamily.

It catalyses the reaction L-cysteine + L-glutamate + ATP = gamma-L-glutamyl-L-cysteine + ADP + phosphate + H(+). Its function is as follows. ATP-dependent carboxylate-amine ligase which exhibits weak glutamate--cysteine ligase activity. This chain is Putative glutamate--cysteine ligase 2-1, found in Nocardia farcinica (strain IFM 10152).